A 340-amino-acid chain; its full sequence is Large ribosomal subunit protein uL29m (340 aa).

Residues 1 to 10 (MIRSLHTSAV) are compositionally biased toward polar residues. The tract at residues 1–22 (MIRSLHTSAVRQGRKKWPKPLP) is disordered.

Belongs to the universal ribosomal protein uL29 family. As to quaternary structure, component of the mitochondrial large ribosomal subunit. Mature mitochondrial ribosomes consist of a small (37S) and a large (54S) subunit. The 37S subunit contains at least 33 different proteins and 1 molecule of RNA (15S). The 54S subunit contains at least 45 different proteins and 1 molecule of RNA (21S).

The protein resides in the mitochondrion. The polypeptide is Large ribosomal subunit protein uL29m (MRPL4) (Yarrowia lipolytica (strain CLIB 122 / E 150) (Yeast)).